The chain runs to 476 residues: Cysteine--tRNA ligase (476 aa).

C28 is a binding site for Zn(2+). Residues 30–40 (VTTYDFCHIGH) carry the 'HIGH' region motif. Zn(2+) is bound by residues C215, H241, and E245. The short motif at 273–277 (KMSKS) is the 'KMSKS' region element. K276 provides a ligand contact to ATP.

The protein belongs to the class-I aminoacyl-tRNA synthetase family. Monomer. Zn(2+) is required as a cofactor.

Its subcellular location is the cytoplasm. It carries out the reaction tRNA(Cys) + L-cysteine + ATP = L-cysteinyl-tRNA(Cys) + AMP + diphosphate. This chain is Cysteine--tRNA ligase, found in Buchnera aphidicola subsp. Cinara cedri (strain Cc).